Consider the following 542-residue polypeptide: Carbamoyl phosphate synthase large chain, C-terminal section (542 aa).

Residues 1–389 form a carbamoyl phosphate synthetic domain region; sequence MSDKVLVIGA…WKAQLAAGHE (389 aa). The 195-residue stretch at 122–316 folds into the ATP-grasp domain; it reads SKLLKKLGIP…LAKIGTKAIL (195 aa). Residues Arg-158, Arg-197, Ile-199, Glu-204, Gly-230, Val-231, His-232, Ser-233, Gln-273, and Glu-287 each contribute to the ATP site. Gln-273, Glu-287, and Asn-289 together coordinate Mg(2+). Residues Gln-273, Glu-287, and Asn-289 each coordinate Mn(2+). An MGS-like domain is found at 388–542; that stretch reads HELPLEGTAV…KPEELTRYGG (155 aa). The tract at residues 390–542 is allosteric domain; sequence LPLEGTAVIS…KPEELTRYGG (153 aa).

It belongs to the CarB family. In terms of assembly, composed of two chains; the small (or glutamine) chain promotes the hydrolysis of glutamine to ammonia, which is used by the large (or ammonia) chain to synthesize carbamoyl phosphate. Tetramer of heterodimers (alpha,beta)4. It depends on Mg(2+) as a cofactor. Mn(2+) serves as cofactor.

The enzyme catalyses hydrogencarbonate + L-glutamine + 2 ATP + H2O = carbamoyl phosphate + L-glutamate + 2 ADP + phosphate + 2 H(+). It carries out the reaction hydrogencarbonate + NH4(+) + 2 ATP = carbamoyl phosphate + 2 ADP + phosphate + 2 H(+). Its pathway is amino-acid biosynthesis; L-arginine biosynthesis; carbamoyl phosphate from bicarbonate: step 1/1. It functions in the pathway pyrimidine metabolism; UMP biosynthesis via de novo pathway; (S)-dihydroorotate from bicarbonate: step 1/3. Large subunit of the glutamine-dependent carbamoyl phosphate synthetase (CPSase). CPSase catalyzes the formation of carbamoyl phosphate from the ammonia moiety of glutamine, carbonate, and phosphate donated by ATP, constituting the first step of 2 biosynthetic pathways, one leading to arginine and/or urea and the other to pyrimidine nucleotides. The large subunit (synthetase) binds the substrates ammonia (free or transferred from glutamine from the small subunit), hydrogencarbonate and ATP and carries out an ATP-coupled ligase reaction, activating hydrogencarbonate by forming carboxy phosphate which reacts with ammonia to form carbamoyl phosphate. This Methanopyrus kandleri (strain AV19 / DSM 6324 / JCM 9639 / NBRC 100938) protein is Carbamoyl phosphate synthase large chain, C-terminal section (carB2).